The chain runs to 823 residues: Putative E3 ubiquitin-protein ligase RF4 (823 aa).

Disordered stretches follow at residues 24 to 72, 224 to 291, and 432 to 464; these read TVSP…NGSV, SKLS…CSGS, and ESVT…SEEK. The segment covering 61-72 has biased composition (polar residues); it reads KPQNHLSGNGSV. Low complexity predominate over residues 224–240; sequence SKLSDSESLGAESNPPK. The segment covering 267–282 has biased composition (polar residues); sequence FPNTPNSKKTQSSGTT. Residues 453 to 464 show a composition bias toward basic and acidic residues; that stretch reads SEKKSGSESEEK. A coiled-coil region spans residues 536 to 738; it reads ELKALRKERE…ELKLKSDYSR (203 aa). An RING-type zinc finger spans residues 768–808; that stretch reads CVMCLSEEMSVIFLPCAHQVLCFKCNQLHEKEGMMDCPSCR.

It belongs to the RING-type zinc finger family.

It catalyses the reaction S-ubiquitinyl-[E2 ubiquitin-conjugating enzyme]-L-cysteine + [acceptor protein]-L-lysine = [E2 ubiquitin-conjugating enzyme]-L-cysteine + N(6)-ubiquitinyl-[acceptor protein]-L-lysine.. Its pathway is protein modification; protein ubiquitination. The chain is Putative E3 ubiquitin-protein ligase RF4 (RF4) from Arabidopsis thaliana (Mouse-ear cress).